The primary structure comprises 425 residues: MNTTTCTHKDNPNFWIFGLFFFLYFFIMATCFPFLPIWLSDIIGLNKTHTGIVFSCISLSAIAFQPVLGVISDKLGLKKHLLWIISVLLFLFAPFFLYVFAPLLKTNIWLGALSGGLYIGFVFSAGSGAIEAYIERVSRNSAFEYGKARMFGCLGWGLCASTGGILFGIDPSYVFWMGSAAALLLMLLLVVAKPKPNQTAQVMNALGANQPQITAKKVFNLFRQRRMWMFILYVIGVACVYDVFDQQFATFFKTFFATPQEGTRAFGFATTAGEICNAIIMFCSPWIINRIGAKNTLLIAGLIMATRIIGSSFATTAVEVIALKMLHALEVPFLLVGAFKYITGVFDTRLSATIYLIGFQFAKQSAAIFLSAFAGNMYDRIGFQETYLMLGCFVLAITVVSAFTLSSRQEIAAAAGAAALTSQSR.

Topologically, residues 1-13 (MNTTTCTHKDNPN) are cytoplasmic. The helical transmembrane segment at 14–34 (FWIFGLFFFLYFFIMATCFPF) threads the bilayer. Over 35 to 50 (LPIWLSDIIGLNKTHT) the chain is Periplasmic. The helical transmembrane segment at 51 to 71 (GIVFSCISLSAIAFQPVLGVI) threads the bilayer. The Cytoplasmic portion of the chain corresponds to 72–80 (SDKLGLKKH). Residues 81 to 101 (LLWIISVLLFLFAPFFLYVFA) form a helical membrane-spanning segment. Over 102 to 107 (PLLKTN) the chain is Periplasmic. The chain crosses the membrane as a helical span at residues 108–128 (IWLGALSGGLYIGFVFSAGSG). The Cytoplasmic segment spans residues 129-149 (AIEAYIERVSRNSAFEYGKAR). The helical transmembrane segment at 150–170 (MFGCLGWGLCASTGGILFGID) threads the bilayer. A topological domain (periplasmic) is located at residue Pro-171. Residues 172-192 (SYVFWMGSAAALLLMLLLVVA) traverse the membrane as a helical segment. Residues 193–227 (KPKPNQTAQVMNALGANQPQITAKKVFNLFRQRRM) lie on the Cytoplasmic side of the membrane. Residues 228–248 (WMFILYVIGVACVYDVFDQQF) form a helical membrane-spanning segment. Residues 249-267 (ATFFKTFFATPQEGTRAFG) lie on the Periplasmic side of the membrane. The helical transmembrane segment at 268-288 (FATTAGEICNAIIMFCSPWII) threads the bilayer. Residues 289 to 297 (NRIGAKNTL) are Cytoplasmic-facing. Residues 298–318 (LIAGLIMATRIIGSSFATTAV) form a helical membrane-spanning segment. Topologically, residues 319–325 (EVIALKM) are periplasmic. A helical membrane pass occupies residues 326-346 (LHALEVPFLLVGAFKYITGVF). The Cytoplasmic portion of the chain corresponds to 347 to 353 (DTRLSAT). Residues 354–374 (IYLIGFQFAKQSAAIFLSAFA) form a helical membrane-spanning segment. The Periplasmic segment spans residues 375 to 385 (GNMYDRIGFQE). A helical membrane pass occupies residues 386–406 (TYLMLGCFVLAITVVSAFTLS). Over 407–425 (SRQEIAAAAGAAALTSQSR) the chain is Cytoplasmic.

Belongs to the major facilitator superfamily. Oligosaccharide:H(+) symporter (OHS) (TC 2.A.1.5) family.

Its subcellular location is the cell inner membrane. Responsible for transport of melibiose into the cell, with the concomitant import of a proton (symport system). Can also transport lactose, and has weak activity with maltose. Cannot transport the analog methyl-1-thio-beta,D-galactopyranoside (TMG). The protein is Melibiose permease of Enterobacter cloacae subsp. cloacae (strain ATCC 13047 / DSM 30054 / NBRC 13535 / NCTC 10005 / WDCM 00083 / NCDC 279-56).